We begin with the raw amino-acid sequence, 353 residues long: Rhodopsin (353 aa).

Residues 1–36 (MNGTEGPYFYIPMVNTTGIVRSPYEYPQYYLVNPAA) are Extracellular-facing. Residues Asn-2 and Asn-15 are each glycosylated (N-linked (GlcNAc...) asparagine). Residues 37 to 61 (YAALGAYMFLLILLGFPINFLTLYV) form a helical membrane-spanning segment. At 62-73 (TIEHKKLRTPLN) the chain is on the cytoplasmic side. Residues 74 to 96 (YILLNLAVANLFMVFGGFTTTMY) form a helical membrane-spanning segment. At 97 to 110 (TSMHGYFVLGRLGC) the chain is on the extracellular side. The cysteines at positions 110 and 187 are disulfide-linked. The helical transmembrane segment at 111–133 (NLEGFFATLGGEIALWSLVVLAV) threads the bilayer. Positions 134-136 (ERW) match the 'Ionic lock' involved in activated form stabilization motif. The Cytoplasmic portion of the chain corresponds to 134–152 (ERWMVVCKPISNFRFGENH). The helical transmembrane segment at 153-173 (AIMGLAFTWVMASACAVPPLV) threads the bilayer. At 174–202 (GWSRYIPEGMQCSCGIDYYTRAEGFNNES) the chain is on the extracellular side. N-linked (GlcNAc...) asparagine glycosylation occurs at Asn-200. Residues 203–224 (FVIYMFVCHFLIPLVVVFFCYG) traverse the membrane as a helical segment. At 225-252 (RLLCAVKEAAAAQQESETTQRAEREVSR) the chain is on the cytoplasmic side. Residues 253 to 274 (MVVIMVVAFLICWCPYAGVAWY) form a helical membrane-spanning segment. The Extracellular portion of the chain corresponds to 275–286 (IFTHQGSEFGPL). A helical membrane pass occupies residues 287–308 (FMTFPAFFAKSSSIYNPMIYIC). Lys-296 carries the post-translational modification N6-(retinylidene)lysine. The Cytoplasmic portion of the chain corresponds to 309 to 353 (MNKQFRHCMITTLCCGKNPFEEEEGASTTSKTEASSVSSSSVSPA). Residues Cys-322 and Cys-323 are each lipidated (S-palmitoyl cysteine). The segment at 330-353 (EEEGASTTSKTEASSVSSSSVSPA) is disordered. The span at 334–353 (ASTTSKTEASSVSSSSVSPA) shows a compositional bias: low complexity.

It belongs to the G-protein coupled receptor 1 family. Opsin subfamily. In terms of processing, phosphorylated on some or all of the serine and threonine residues present in the C-terminal region. Contains one covalently linked retinal chromophore.

Its subcellular location is the membrane. It localises to the cell projection. The protein localises to the cilium. It is found in the photoreceptor outer segment. Photoreceptor required for image-forming vision at low light intensity. While most salt water fish species use retinal as chromophore, most freshwater fish use 3-dehydroretinal, or a mixture of retinal and 3-dehydroretinal. Light-induced isomerization of 11-cis to all-trans retinal triggers a conformational change that activates signaling via G-proteins. Subsequent receptor phosphorylation mediates displacement of the bound G-protein alpha subunit by arrestin and terminates signaling. The polypeptide is Rhodopsin (rho) (Mugil cephalus (Flathead mullet)).